The sequence spans 581 residues: MPESNSAEGSDRSEEQVSGAKVIAQALKTQDVEYMFGVVGIPVTEIALAAQELGIKYIGMRNEQAACYAASAVGYLTGRPGVCLVVSGPGLIHALGGMANANMNCWPLIVIGGSSERNQEAMGAFQEFPQVEACRLYTKFSARPSTIELIPFIIEKAVRSSIYGRPGACYIDIPADFVTLQANVTSIKYKECCMPPPVSMAETSAVCAAASVLRDAKQPLLIIGKGAAYSHAEDSIRKLVEQCSLPFLPTPMGKGVVPDNHPNCVGAARSRALQSADVIVLFGARLNWILHFGLPPRYQADVKFIQIDICAEELGNNVRPSVILLGDIDAVSKQLLEQFDKTPWQCPPDSQWWKTLREKMKSNEAISKELASQKSLPMNYYTVFYHVQEQLPRDSFIVSEGANTMDIGRTMLQNCLPRHRLDAGSFGTMGVGLGFAIAAALVAKDRSPGQRVICVEGDSAFGFSGMEVETICRYNLPIILLVVNNNGIYQGFDADTWEKMLHFQEAATTVPPMCLLPNSHYEQVMTAFGGKGYFVRTPEELQHSLRQALQDTSKPCLLNIMIEPQSTRKAQDFHWLTRSNM.

Residues S4 and S6 each carry the phosphoserine modification. E63 serves as a coordination point for thiamine diphosphate. An N6-succinyllysine mark is found at K354, K361, and K368. The segment at 404–487 is thiamine pyrophosphate binding; that stretch reads TMDIGRTMLQ…IILLVVNNNG (84 aa). Residues D458 and N485 each contribute to the Mg(2+) site. The Microbody targeting signal motif lies at 579–581; the sequence is SNM.

Belongs to the TPP enzyme family. As to quaternary structure, homotetramer. Mg(2+) is required as a cofactor. Requires thiamine diphosphate as cofactor. As to expression, predominanly expressed in liver.

It is found in the peroxisome. It catalyses the reaction a 2-hydroxy-3-methyl fatty acyl-CoA = a 2-methyl-branched fatty aldehyde + formyl-CoA. The enzyme catalyses an (R)-2-hydroxy-long-chain-fatty acyl-CoA = a long-chain fatty aldehyde + formyl-CoA. The catalysed reaction is 2-hydroxy-3-methylhexadecanoyl-CoA = 2-methylpentadecanal + formyl-CoA. It carries out the reaction 2-hydroxyoctadecanoyl-CoA = heptadecanal + formyl-CoA. It catalyses the reaction 2-hydroxyphytanoyl-CoA = 2,6,10,14-tetramethylpentadecanal + formyl-CoA. It participates in lipid metabolism; fatty acid metabolism. In terms of biological role, peroxisomal 2-OH acyl-CoA lyase involved in the cleavage (C1 removal) reaction in the fatty acid alpha-oxydation in a thiamine pyrophosphate (TPP)-dependent manner. Involved in the degradation of 3-methyl-branched fatty acids like phytanic acid and the shortening of 2-hydroxy long-chain fatty acids. Plays a significant role in the biosynthesis of heptadecanal in the liver. The protein is 2-hydroxyacyl-CoA lyase 1 (Hacl1) of Mus musculus (Mouse).